We begin with the raw amino-acid sequence, 119 residues long: Large ribosomal subunit protein uL22 (119 aa).

This sequence belongs to the universal ribosomal protein uL22 family. As to quaternary structure, part of the 50S ribosomal subunit.

Its function is as follows. This protein binds specifically to 23S rRNA; its binding is stimulated by other ribosomal proteins, e.g. L4, L17, and L20. It is important during the early stages of 50S assembly. It makes multiple contacts with different domains of the 23S rRNA in the assembled 50S subunit and ribosome. Functionally, the globular domain of the protein is located near the polypeptide exit tunnel on the outside of the subunit, while an extended beta-hairpin is found that lines the wall of the exit tunnel in the center of the 70S ribosome. The polypeptide is Large ribosomal subunit protein uL22 (Rickettsia conorii (strain ATCC VR-613 / Malish 7)).